Here is a 582-residue protein sequence, read N- to C-terminus: ABC transporter-like protein ECU11_1340 (582 aa).

The 243-residue stretch at 15–257 folds into the ABC transporter domain; the sequence is VPNQNLSSNE…LGTKGIHNDG (243 aa). Residue 47–54 participates in ATP binding; it reads GTSGSGKT. Positions 316 to 519 constitute an ABC transmembrane type-2 domain; the sequence is YVSFQMAIRQ…EIDAFISNFF (204 aa). 6 helical membrane-spanning segments follow: residues 335–355, 359–378, 412–432, 436–456, 482–502, and 551–571; these read ILYS…GKYI, FSIA…YVMN, TLVS…FGLI, HAFL…SMLF, GALL…SVIP, and SFLR…SSIL.

It belongs to the ABC transporter superfamily.

It is found in the membrane. This chain is ABC transporter-like protein ECU11_1340, found in Encephalitozoon cuniculi (strain GB-M1) (Microsporidian parasite).